The primary structure comprises 180 residues: MKKIALAGLAGMLLVSASVNAMSISGQAGKEYTNIGVGFGTETTGLALSGNWTHNDDDGDVAGVGLGLNLPLGPLMATVGGKGVYTNPNYGDEGYAAAVGGGLQWKIGNSFRLFGEYYYSPDSLSSGIQSYEEANAGARYTIMRPVSIEAGYRYLNLSGKDGNRDNAVADGPYVGVNASF.

The first 21 residues, 1-21 (MKKIALAGLAGMLLVSASVNA), serve as a signal peptide directing secretion.

The protein localises to the cell outer membrane. The protein is Outer membrane protein YfaZ (yfaZ) of Escherichia coli (strain K12).